The sequence spans 241 residues: Small ribosomal subunit protein uS2 (241 aa).

The protein belongs to the universal ribosomal protein uS2 family.

The chain is Small ribosomal subunit protein uS2 from Sodalis glossinidius (strain morsitans).